Consider the following 2051-residue polypeptide: Fatty acid synthase subunit beta (2051 aa).

N-acetylmethionine is present on methionine 1. The tract at residues 1 to 468 is acetyltransferase; the sequence is MDAYSTRPLT…VYDTFDGSDL (468 aa). Residue serine 274 is the For acetyltransferase activity of the active site. The interval 480–868 is enoyl reductase; sequence VDCIIRLPVK…TRGVMLWKEF (389 aa). Phosphothreonine is present on threonine 733. Serine 1121 carries the phosphoserine modification. The interval 1144-1626 is dehydratase; it reads GSEINWRHAS…LPNTALKTSI (483 aa). Residue lysine 1364 forms a Glycyl lysine isopeptide (Lys-Gly) (interchain with G-Cter in ubiquitin) linkage. In terms of domain architecture, MaoC-like spans 1523–1648; sequence NGSTLEQKVN…KFETRNEDDV (126 aa). A malonyl/palmitoyl transferase region spans residues 1627-1845; that stretch reads QHVGMINGRK…MTMQVAVPRD (219 aa). Residue serine 1808 is the For malonyltransferase activity of the active site.

It belongs to the fungal fatty acid synthetase subunit beta family. As to quaternary structure, [Alpha(6)beta(6)] hexamers of two multifunctional subunits (alpha and beta).

The enzyme catalyses acetyl-CoA + n malonyl-CoA + 2n NADPH + 4n H(+) = a long-chain-acyl-CoA + n CoA + n CO2 + 2n NADP(+).. The catalysed reaction is holo-[ACP] + acetyl-CoA = acetyl-[ACP] + CoA. It catalyses the reaction holo-[ACP] + malonyl-CoA = malonyl-[ACP] + CoA. It carries out the reaction a (3R)-hydroxyacyl-[ACP] = a (2E)-enoyl-[ACP] + H2O. The enzyme catalyses a 2,3-saturated acyl-[ACP] + NAD(+) = a (2E)-enoyl-[ACP] + NADH + H(+). The catalysed reaction is (9Z)-octadecenoyl-[ACP] + H2O = (9Z)-octadecenoate + holo-[ACP] + H(+). Fatty acid synthetase catalyzes the formation of long-chain fatty acids from acetyl-CoA, malonyl-CoA and NADPH. The beta subunit contains domains for: [acyl-carrier-protein] acetyltransferase and malonyltransferase, S-acyl fatty acid synthase thioesterase, enoyl-[acyl-carrier-protein] reductase, and 3-hydroxypalmitoyl-[acyl-carrier-protein] dehydratase. The polypeptide is Fatty acid synthase subunit beta (FAS1) (Saccharomyces cerevisiae (strain ATCC 204508 / S288c) (Baker's yeast)).